The sequence spans 1290 residues: Alpha-amylase (1290 aa).

Positions 1 to 31 (MTRKTRYLHQITTLILGGLLIVPAAAPPVSA) are cleaved as a signal peptide. The Nucleophile role is filled by glutamate 231. The active-site Proton donor is aspartate 373. Positions 817 to 902 (VPANLQATVM…AAATATTPAG (86 aa)) constitute a Fibronectin type-III domain. Residues 902-978 (GNHVTVYYKQ…SNGGSNYLFG (77 aa)) form a CBM25 region. Low complexity-rich tracts occupy residues 994 to 1008 (APVA…APTA) and 1016 to 1031 (VTPT…VAPT). The tract at residues 994–1037 (APVAPSATPTVAPTATPTPKPSVTPTVTPITTPTVAPTLSPTPT) is disordered. Residues 1092 to 1171 (GNSATIYYKN…NGGSNYHFGT (80 aa)) form a CBM25 region. Residues 1183–1289 (TGEPQADSVT…VTLTVQRWKD (107 aa)) form the CBM20 domain.

The protein belongs to the glycosyl hydrolase 119 (GH119) family.

It is found in the secreted. It carries out the reaction Endohydrolysis of (1-&gt;4)-alpha-D-glucosidic linkages in polysaccharides containing three or more (1-&gt;4)-alpha-linked D-glucose units.. Acts on maltooligosaccharides that have a degree of polymerization (DP) of 4 or more, amylose, and soluble or raw starch to produce glucose and maltooligosaccharides up to DP5 by a hydrolysis reaction. Also acts on maltooligosyl trehaloses that have DP5 or more to produce trehalose as the major hydrolysis product. This is Alpha-amylase from Niallia circulans (Bacillus circulans).